Reading from the N-terminus, the 530-residue chain is Phosphoenolpyruvate carboxykinase (ATP) (530 aa).

The substrate site is built by Arg-58, Tyr-195, and Lys-201. ATP is bound by residues Lys-201, His-220, and 236 to 244 (GLSGTGKTT). Positions 201 and 220 each coordinate Mn(2+). Mn(2+) is bound at residue Asp-257. Residues Glu-285, Arg-321, 440 to 441 (RI), and Thr-446 each bind ATP. Arg-321 provides a ligand contact to substrate.

Belongs to the phosphoenolpyruvate carboxykinase (ATP) family. Requires Mn(2+) as cofactor.

It is found in the cytoplasm. It catalyses the reaction oxaloacetate + ATP = phosphoenolpyruvate + ADP + CO2. Its pathway is carbohydrate biosynthesis; gluconeogenesis. Involved in the gluconeogenesis. Catalyzes the conversion of oxaloacetate (OAA) to phosphoenolpyruvate (PEP) through direct phosphoryl transfer between the nucleoside triphosphate and OAA. The sequence is that of Phosphoenolpyruvate carboxykinase (ATP) from Staphylococcus haemolyticus (strain JCSC1435).